The chain runs to 59 residues: UPF0434 protein Shewmr7_2490 (59 aa).

This sequence belongs to the UPF0434 family.

In Shewanella sp. (strain MR-7), this protein is UPF0434 protein Shewmr7_2490.